A 108-amino-acid polypeptide reads, in one-letter code: Thioredoxin (108 aa).

The 107-residue stretch at 2 to 108 (NKIIELTDQN…LKDFLDENIK (107 aa)) folds into the Thioredoxin domain. Cysteine 32 and cysteine 35 are joined by a disulfide.

The protein belongs to the thioredoxin family.

Its function is as follows. Participates in various redox reactions through the reversible oxidation of its active center dithiol to a disulfide and catalyzes dithiol-disulfide exchange reactions. This chain is Thioredoxin (trxA), found in Buchnera aphidicola subsp. Schizaphis graminum (strain Sg).